A 743-amino-acid polypeptide reads, in one-letter code: tRNA(Met) cytidine acetyltransferase TmcA (743 aa).

ATP-binding positions include Gln216, 241–250, and Arg390; that span reads GRGKSASIGL. Residues 420–604 form the N-acetyltransferase domain; the sequence is LKIEDVSQEE…YSVIVIRALS (185 aa). Acetyl-CoA contacts are provided by residues 531–533 and 538–544; these read IAV and QGKGIGS.

It belongs to the RNA cytidine acetyltransferase family. TmcA subfamily.

It localises to the cytoplasm. The catalysed reaction is cytidine(34) in elongator tRNA(Met) + acetyl-CoA + ATP + H2O = N(4)-acetylcytidine(34) in elongator tRNA(Met) + ADP + phosphate + CoA + H(+). In terms of biological role, catalyzes the formation of N(4)-acetylcytidine (ac(4)C) at the wobble position of tRNA(Met), by using acetyl-CoA as an acetyl donor and ATP (or GTP). This is tRNA(Met) cytidine acetyltransferase TmcA from Saccharolobus islandicus (strain Y.G.57.14 / Yellowstone #1) (Sulfolobus islandicus).